Reading from the N-terminus, the 205-residue chain is Dephospho-CoA kinase (205 aa).

Residues 4-204 (VVGLTGGIAS…QYYLTLATQQ (201 aa)) form the DPCK domain. 12-17 (ASGKTT) lines the ATP pocket.

The protein belongs to the CoaE family.

The protein localises to the cytoplasm. It catalyses the reaction 3'-dephospho-CoA + ATP = ADP + CoA + H(+). The protein operates within cofactor biosynthesis; coenzyme A biosynthesis; CoA from (R)-pantothenate: step 5/5. Catalyzes the phosphorylation of the 3'-hydroxyl group of dephosphocoenzyme A to form coenzyme A. This is Dephospho-CoA kinase from Haemophilus ducreyi (strain 35000HP / ATCC 700724).